Consider the following 329-residue polypeptide: Octaprenyl diphosphate synthase (329 aa).

Isopentenyl diphosphate-binding residues include Lys51, Arg54, and His83. Residues Asp90 and Asp94 each coordinate Mg(2+). Arg99 contributes to the an all-trans-polyprenyl diphosphate binding site. Arg100 is an isopentenyl diphosphate binding site. Lys176, Thr177, and Gln214 together coordinate an all-trans-polyprenyl diphosphate.

It belongs to the FPP/GGPP synthase family. It depends on Mg(2+) as a cofactor.

The enzyme catalyses 5 isopentenyl diphosphate + (2E,6E)-farnesyl diphosphate = all-trans-octaprenyl diphosphate + 5 diphosphate. Functionally, supplies octaprenyl diphosphate, the precursor for the side chain of the isoprenoid quinones ubiquinone and menaquinone. This is Octaprenyl diphosphate synthase (ispB) from Haemophilus influenzae (strain ATCC 51907 / DSM 11121 / KW20 / Rd).